A 359-amino-acid polypeptide reads, in one-letter code: NADH-quinone oxidoreductase subunit H (359 aa).

The next 8 membrane-spanning stretches (helical) occupy residues 16 to 36 (IWPATVWPVLWALIKIVCVLL), 94 to 114 (GLFVLGPIMTIMPALAAWAVI), 129 to 149 (LLFLMAITSMEVYGVIIAGWA), 167 to 187 (VSYEIAMGFCLVVVLMVSASL), 208 to 228 (FLSWNWLPLLPIFVVYFISGL), 261 to 281 (FFLAEYANMWLVAILAVILFL), 296 to 316 (IPGWIWLGAKTFVVVTMFLWV), and 331 to 351 (LGWKIFIPVTLVWLVVVGAWM).

This sequence belongs to the complex I subunit 1 family. As to quaternary structure, NDH-1 is composed of 14 different subunits. Subunits NuoA, H, J, K, L, M, N constitute the membrane sector of the complex.

It localises to the cell inner membrane. The catalysed reaction is a quinone + NADH + 5 H(+)(in) = a quinol + NAD(+) + 4 H(+)(out). Functionally, NDH-1 shuttles electrons from NADH, via FMN and iron-sulfur (Fe-S) centers, to quinones in the respiratory chain. The immediate electron acceptor for the enzyme in this species is believed to be ubiquinone. Couples the redox reaction to proton translocation (for every two electrons transferred, four hydrogen ions are translocated across the cytoplasmic membrane), and thus conserves the redox energy in a proton gradient. This subunit may bind ubiquinone. In Polaromonas sp. (strain JS666 / ATCC BAA-500), this protein is NADH-quinone oxidoreductase subunit H.